Consider the following 528-residue polypeptide: Chromosomal replication initiator protein DnaA (528 aa).

Residues 1 to 104 are domain I, interacts with DnaA modulators; the sequence is MNDDPNALAR…PVDDEPESEA (104 aa). Positions 93–159 are disordered; that stretch reads AAPVDDEPES…DFEEVDDDSE (67 aa). Over residues 104 to 123 the composition is skewed to basic and acidic residues; sequence APSRERRPDPEPVHTPRHLE. The segment at 105-187 is domain II; that stretch reads PSRERRPDPE…GPAPAATGGN (83 aa). Positions 149 to 159 are enriched in acidic residues; it reads TDFEEVDDDSE. A domain III, AAA+ region region spans residues 188–404; it reads SLNAKYTFDT…GALIRVTAFA (217 aa). ATP-binding residues include Gly-232, Gly-234, Lys-235, and Thr-236. Residues 405 to 528 are domain IV, binds dsDNA; it reads SLNRQPLDLT…TARIKQRSKR (124 aa).

The protein belongs to the DnaA family. In terms of assembly, oligomerizes as a right-handed, spiral filament on DNA at oriC.

It localises to the cytoplasm. Its function is as follows. Plays an essential role in the initiation and regulation of chromosomal replication. ATP-DnaA binds to the origin of replication (oriC) to initiate formation of the DNA replication initiation complex once per cell cycle. Binds the DnaA box (a 9 base pair repeat at the origin) and separates the double-stranded (ds)DNA. Forms a right-handed helical filament on oriC DNA; dsDNA binds to the exterior of the filament while single-stranded (ss)DNA is stabiized in the filament's interior. The ATP-DnaA-oriC complex binds and stabilizes one strand of the AT-rich DNA unwinding element (DUE), permitting loading of DNA polymerase. After initiation quickly degrades to an ADP-DnaA complex that is not apt for DNA replication. Binds acidic phospholipids. The chain is Chromosomal replication initiator protein DnaA from Rhodococcus opacus (strain B4).